The chain runs to 1335 residues: Mediator of RNA polymerase II transcription subunit 15a (1335 aa).

8 disordered regions span residues 1-27 (MDNNNWRPSLPNGEPAMDTGDWRTQLP), 109-172 (GTSI…NNNT), 190-225 (QDSSGQHGLSSNMFSGPQRQMLGRPHAMSSQQQQQP), 241-389 (FQSG…QHQQ), 401-448 (IQQQ…TQSN), 496-525 (LYSSQGQQSQNQPSQQQMMPQLQSHHQQLG), 567-591 (SQRTLPEMPSSSLDSTAQTESANGG), and 683-815 (HRPR…QSNV). Composition is skewed to polar residues over residues 110-158 (TSID…TALP), 190-207 (QDSSGQHGLSSNMFSGPQ), and 241-257 (FQSGNVPNPNSLLPSHI). Residues 258 to 270 (QQQQQNVLQPNQL) show a composition bias toward low complexity. Residues 271–299 (HSSQQPGVPTSATQPSTVNSAPLQGLHTN) are compositionally biased toward polar residues. Low complexity predominate over residues 300–314 (QQSSPQLSSQQTTQS). Residues 315 to 328 (MLRQHQSSMLRQHP) are compositionally biased toward polar residues. The span at 329-362 (QSQQASGIHQQQSSLPQQSISPLQQQPTQLMRQQ) shows a compositional bias: low complexity. Polar residues predominate over residues 363–374 (AANSSGIQQKQM). Over residues 401–436 (IQQQQSQQQPLQQPQQQQKQQPPAQQQLMSQQNSLQ) the composition is skewed to low complexity. A compositionally biased stretch (polar residues) spans 437-448 (ATHQNPLGTQSN). Residues 498–525 (SSQGQQSQNQPSQQQMMPQLQSHHQQLG) show a composition bias toward low complexity. Positions 567-588 (SQRTLPEMPSSSLDSTAQTESA) are enriched in polar residues. Residues 688-712 (PVQQGQLPQSQMQPMQQPQSQTVQD) are compositionally biased toward low complexity. 3 stretches are compositionally biased toward polar residues: residues 716 to 728 (DNQTNPQMQSMSM), 735 to 749 (AQQSSMTNMQSNVLS), and 756 to 815 (APQQ…QSNV). The stretch at 834–882 (QDQQMQLKQQFQQRQMQQQQLQARQQQQQQQLQARQQAAQLQQMNDMND) forms a coiled coil. Disordered stretches follow at residues 947 to 986 (KMGTPLQPANSPFVVPSPSSTPLAPSPMQVDSEKPGSSSL) and 1146 to 1165 (FAGSETSDLESTATSDGKKA). Low complexity predominate over residues 957–973 (SPFVVPSPSSTPLAPSP). Residues 1148–1160 (GSETSDLESTATS) are compositionally biased toward polar residues.

The protein belongs to the plant Mediator complex subunit 15 family. In terms of assembly, component of the Mediator complex.

It is found in the nucleus. Functionally, component of the Mediator complex, a coactivator involved in the regulated transcription of nearly all RNA polymerase II-dependent genes. Mediator functions as a bridge to convey information from gene-specific regulatory proteins to the basal RNA polymerase II transcription machinery. The Mediator complex, having a compact conformation in its free form, is recruited to promoters by direct interactions with regulatory proteins and serves for the assembly of a functional preinitiation complex with RNA polymerase II and the general transcription factors. This Arabidopsis thaliana (Mouse-ear cress) protein is Mediator of RNA polymerase II transcription subunit 15a (MED15A).